Reading from the N-terminus, the 539-residue chain is Probable transcription factor GLK2 (539 aa).

Residues 86–218 (FASSPDDEPP…NSHGKRKVKV (133 aa)) form a disordered region. 2 stretches are compositionally biased toward low complexity: residues 99 to 111 (SAPG…AAAG) and 121 to 130 (AAAAAAAAAA). The span at 144–161 (KKDDEERSSSLPEEKDAK) shows a compositional bias: basic and acidic residues. Positions 212 to 271 (GKRKVKVDWTPELHRRFVQAVEQLGIDKAVPSRILELMGIECLTRHNIASHLQKYRSHRK) constitute an HTH myb-type domain. The segment at residues 242–267 (PSRILELMGIECLTRHNIASHLQKYR) is a DNA-binding region (H-T-H motif).

As to expression, expressed in leaves.

Its subcellular location is the nucleus. Probable transcriptional activator that promotes chloroplast development. Acts as an activator of nuclear photosynthetic genes involved in chlorophyll biosynthesis, light harvesting, and electron transport. The sequence is that of Probable transcription factor GLK2 (GLK2) from Oryza sativa subsp. japonica (Rice).